A 248-amino-acid polypeptide reads, in one-letter code: MSTVDKEELVQKAKLAEQSERYDDMAQAMKSVTETGVELSNEERNLLSVAYKNVVGARRSSWRVISSIEQKTESSARKQQLAREYRERVEKELREICYEVLGLLDKFLIPKASNPESKVFYLKMKGDYYRYLAEVATGETRNTVVDDSQAAYQDAFEISKGKMQPTHPIRLGLALNFSVFYYEILNSPDKACQLAKQAFDDAIAELDTLNEDSYKDSTLIMQLLRDNLTLWTSDTQGDGDEPQEGGDN.

Belongs to the 14-3-3 family. In terms of assembly, homodimer.

Its subcellular location is the cytoplasm. Functionally, adapter protein implicated in the regulation of a large spectrum of both general and specialized signaling pathways. Binds to a large number of partners, usually by recognition of a phosphoserine or phosphothreonine motif. Binding generally results in the modulation of the activity of the binding partner. The protein is 14-3-3 protein zeta (14-3-3zeta) of Aedes aegypti (Yellowfever mosquito).